We begin with the raw amino-acid sequence, 336 residues long: Solute-binding protein Csal_2479 (336 aa).

A signal peptide spans 1-33; the sequence is MQTNKRLKMASCVKAAAMLGMLLSVSISTTAQA. Beta-D-glucuronate is bound by residues histidine 42, glutamine 80, arginine 156, arginine 177, tyrosine 200, 217 to 218, and glutamate 244; that span reads NN.

The protein belongs to the bacterial solute-binding protein 7 family. The complex is comprised of an extracytoplasmic solute-binding protein and a heteromeric permease formed by two transmembrane proteins.

It is found in the periplasm. In terms of biological role, solute-binding protein that binds D-glucuronate (in vitro). Probably part of a tripartite ATP-independent periplasmic (TRAP) transport system that mediates solute transport into the cytoplasm. This is Solute-binding protein Csal_2479 from Chromohalobacter salexigens (strain ATCC BAA-138 / DSM 3043 / CIP 106854 / NCIMB 13768 / 1H11).